Here is a 189-residue protein sequence, read N- to C-terminus: Elongation factor P (189 aa).

The protein belongs to the elongation factor P family.

It is found in the cytoplasm. It functions in the pathway protein biosynthesis; polypeptide chain elongation. Functionally, involved in peptide bond synthesis. Stimulates efficient translation and peptide-bond synthesis on native or reconstituted 70S ribosomes in vitro. Probably functions indirectly by altering the affinity of the ribosome for aminoacyl-tRNA, thus increasing their reactivity as acceptors for peptidyl transferase. The sequence is that of Elongation factor P from Rhizobium etli (strain ATCC 51251 / DSM 11541 / JCM 21823 / NBRC 15573 / CFN 42).